The primary structure comprises 491 residues: D-xylose-proton symporter (491 aa).

Residues 1–9 are Cytoplasmic-facing; sequence MNTQYNSSY. A helical transmembrane segment spans residues 10–30; sequence IFSITLVATLGGLLFGYDTAV. Over 31–55 the chain is Periplasmic; the sequence is ISGTVESLNTVFVAPQNLSESAANS. A helical membrane pass occupies residues 56-76; sequence LLGFCVASALIGCIIGGALGG. Over 77–89 the chain is Cytoplasmic; it reads YCSNRFGRRDSLK. A helical transmembrane segment spans residues 90-110; that stretch reads IAAVLFFISGVGSAWPELGFT. Residues 111 to 133 are Periplasmic-facing; that stretch reads SINPDNTVPVYLAGYVPEFVIYR. Residues 134 to 154 form a helical membrane-spanning segment; it reads IIGGIGVGLASMLSPMYIAEL. The Cytoplasmic portion of the chain corresponds to 155–165; it reads APAHIRGKLVS. Residues 166–186 form a helical membrane-spanning segment; it reads FNQFAIIFGQLLVYCVNYFIA. Gln-168 contributes to the beta-D-xylose binding site. Over 187–200 the chain is Periplasmic; the sequence is RSGDASWLNTDGWR. The chain crosses the membrane as a helical span at residues 201–221; that stretch reads YMFASECIPALLFLMLLYTVP. Residues 222 to 272 lie on the Cytoplasmic side of the membrane; it reads ESPRWLMSRGKQEQAEGILRKIMGNTLATQAVQEIKHSLDHGRKTGGRLLM. Residues 273 to 293 form a helical membrane-spanning segment; it reads FGVGVIVIGVMLSIFQQFVGI. Beta-D-xylose contacts are provided by residues 288–289 and Asn-294; that span reads QQ. At 294 to 312 the chain is on the periplasmic side; it reads NVVLYYAPEVFKTLGASTD. The chain crosses the membrane as a helical span at residues 313–333; the sequence is IALLQTIIVGVINLTFTVLAI. Over 334-343 the chain is Cytoplasmic; the sequence is MTVDKFGRKP. A helical transmembrane segment spans residues 344 to 364; sequence LQIIGALGMAIGMFSLGTAFY. The Periplasmic portion of the chain corresponds to 365-369; that stretch reads TQAPG. A helical membrane pass occupies residues 370 to 390; the sequence is IVALLSMLFYVAAFAMSWGPV. The Cytoplasmic segment spans residues 391-407; the sequence is CWVLLSEIFPNAIRGKA. Beta-D-xylose-binding residues include Trp-392 and Gln-415. Residues 408–428 form a helical membrane-spanning segment; sequence LAIAVAAQWLANYFVSWTFPM. Residues 429–442 lie on the Periplasmic side of the membrane; the sequence is MDKNSWLVAHFHNG. The helical transmembrane segment at 443-463 threads the bilayer; sequence FSYWIYGCMGVLAALFMWKFV. Topologically, residues 464-491 are cytoplasmic; that stretch reads PETKGKTLEELEALWEPETKKTQQTATL.

Belongs to the major facilitator superfamily. Sugar transporter (TC 2.A.1.1) family.

Its subcellular location is the cell inner membrane. The catalysed reaction is D-xylose(in) + H(+)(in) = D-xylose(out) + H(+)(out). Its function is as follows. Uptake of D-xylose across the boundary membrane with the concomitant transport of protons into the cell (symport system). The protein is D-xylose-proton symporter (xylE) of Escherichia coli O157:H7.